A 388-amino-acid chain; its full sequence is Deoxyguanosinetriphosphate triphosphohydrolase-like protein (388 aa).

The disordered stretch occupies residues 24 to 44; that stretch reads HSAQTRGRVHAEPPSTSRTEF. In terms of domain architecture, HD spans 78–209; the sequence is RLTHSLEVAQ…ANLADEVAYN (132 aa).

The protein belongs to the dGTPase family. Type 2 subfamily.

This is Deoxyguanosinetriphosphate triphosphohydrolase-like protein from Ralstonia pickettii (strain 12J).